Reading from the N-terminus, the 551-residue chain is Calnexin (551 aa).

The first 23 residues, 1–23 (MRPQNVAGVAGTGALIMAAGALA), serve as a signal peptide directing secretion. Over 24–477 (DQTVFHPTSL…QAIKQMPEVA (454 aa)) the chain is Lumenal. Positions 293 to 315 (EEEPETIPDPEAEKPEEWDDEED) are disordered. A helical membrane pass occupies residues 478 to 498 (AGLAAAVFTLLGMLLALFGFI). Residues 499 to 551 (GSAPTKVKQTTVKTKAVAPVAPAGEEEKKALDQAGVEIPAEGSKKRVTRSTKE) are Cytoplasmic-facing. The interval 526–551 (KKALDQAGVEIPAEGSKKRVTRSTKE) is disordered.

The protein belongs to the calreticulin family.

It is found in the endoplasmic reticulum membrane. Functionally, endoplasmic reticulum (ER) chaperone that functions to stabilize non-native glycoproteins and retain them in the ER until they are properly folded or targeted for ER associated degradation (ERAD). With co-chaperone DNJ1, coordinately maintains ER homeostasis and contributes to maintenance of cell wall architecture. This Cryptococcus neoformans var. grubii serotype A (strain H99 / ATCC 208821 / CBS 10515 / FGSC 9487) (Filobasidiella neoformans var. grubii) protein is Calnexin.